We begin with the raw amino-acid sequence, 127 residues long: Protein yippee-like 4 (127 aa).

A Yippee domain is found at arginine 27–asparagine 124. Positions 31, 34, 87, and 90 each coordinate Zn(2+). A phosphothreonine mark is found at threonine 92 and threonine 93. Tyrosine 98 is subject to Phosphotyrosine.

Belongs to the yippee family. Detected in brain, spleen and testis.

Its subcellular location is the nucleus. The protein resides in the nucleolus. The protein is Protein yippee-like 4 (Ypel4) of Mus musculus (Mouse).